A 695-amino-acid chain; its full sequence is Centrosomal protein kizuna (695 aa).

Positions 1 to 12 are enriched in gly residues; that stretch reads MPRGRGGGGGGL. The interval 1-24 is disordered; sequence MPRGRGGGGGGLRQASATSAPLAS. The segment covering 15-24 has biased composition (low complexity); it reads ASATSAPLAS. 2 coiled-coil regions span residues 29-57 and 102-132; these read ERVGQLQQALRDSEKKRLDLEDKLYEYNK and VEHLTTNTEKLQKLKTEYEAEVKRMRLLSKD. 4 disordered regions span residues 261 to 313, 351 to 391, 444 to 465, and 633 to 695; these read EIGS…SDRE, HSAW…SDLT, QSFPDSKREPSPDSPRQPEKVP, and SEAS…FYDT. Polar residues-rich tracts occupy residues 263 to 274 and 282 to 297; these read GSSTQHSKSNLS and LHSSLQERLSPENSIT. 2 stretches are compositionally biased toward basic and acidic residues: residues 299-313 and 360-377; these read LKCDSSSRSEGSDRE and DLDHGDSKSQKAVLKHEE. A compositionally biased stretch (low complexity) spans 382-391; it reads GSSCSSSDLT. At Thr-391 the chain carries Phosphothreonine; by PLK1. Positions 448 to 465 are enriched in basic and acidic residues; it reads DSKREPSPDSPRQPEKVP. Positions 633-645 are enriched in low complexity; that stretch reads SEASFSSSEGSPL. A phosphoserine mark is found at Ser-667, Ser-670, and Ser-672. Basic and acidic residues predominate over residues 676 to 686; it reads AALRPRDHDMP.

The protein belongs to the kizuna family. Interacts with AKAP9, CEP72, ODF2, PCNT and TUBGCP2. Phosphorylation at Thr-391 by PLK1 is not needed for centrosomal localization or pericentriolar material expansion but is indispensable for spindle-pole stabilization.

Its subcellular location is the cytoplasm. The protein resides in the cytoskeleton. The protein localises to the microtubule organizing center. It is found in the centrosome. It localises to the cilium basal body. Functionally, centrosomal protein required for establishing a robust mitotic centrosome architecture that can endure the forces that converge on the centrosomes during spindle formation. Required for stabilizing the expanded pericentriolar material around the centriole. This chain is Centrosomal protein kizuna (Kiz), found in Mus musculus (Mouse).